The following is a 382-amino-acid chain: Dual-specificity RNA methyltransferase RlmN (382 aa).

Glu94 serves as the catalytic Proton acceptor. The Radical SAM core domain occupies 100-336 (EANRGTLCVS…NTITRKTRGD (237 aa)). Cys107 and Cys342 are disulfide-bonded. The [4Fe-4S] cluster site is built by Cys114, Cys118, and Cys121. S-adenosyl-L-methionine is bound by residues 168–169 (GE), Ser200, 222–224 (SLH), and Asn299. Cys342 functions as the S-methylcysteine intermediate in the catalytic mechanism.

It belongs to the radical SAM superfamily. RlmN family. Requires [4Fe-4S] cluster as cofactor.

Its subcellular location is the cytoplasm. The catalysed reaction is adenosine(2503) in 23S rRNA + 2 reduced [2Fe-2S]-[ferredoxin] + 2 S-adenosyl-L-methionine = 2-methyladenosine(2503) in 23S rRNA + 5'-deoxyadenosine + L-methionine + 2 oxidized [2Fe-2S]-[ferredoxin] + S-adenosyl-L-homocysteine. It catalyses the reaction adenosine(37) in tRNA + 2 reduced [2Fe-2S]-[ferredoxin] + 2 S-adenosyl-L-methionine = 2-methyladenosine(37) in tRNA + 5'-deoxyadenosine + L-methionine + 2 oxidized [2Fe-2S]-[ferredoxin] + S-adenosyl-L-homocysteine. In terms of biological role, specifically methylates position 2 of adenine 2503 in 23S rRNA and position 2 of adenine 37 in tRNAs. m2A2503 modification seems to play a crucial role in the proofreading step occurring at the peptidyl transferase center and thus would serve to optimize ribosomal fidelity. The sequence is that of Dual-specificity RNA methyltransferase RlmN from Legionella pneumophila (strain Paris).